We begin with the raw amino-acid sequence, 279 residues long: Tryptophan synthase alpha chain (279 aa).

Active-site proton acceptor residues include Glu-50 and Asp-61.

Belongs to the TrpA family. In terms of assembly, tetramer of two alpha and two beta chains.

It carries out the reaction (1S,2R)-1-C-(indol-3-yl)glycerol 3-phosphate + L-serine = D-glyceraldehyde 3-phosphate + L-tryptophan + H2O. Its pathway is amino-acid biosynthesis; L-tryptophan biosynthesis; L-tryptophan from chorismate: step 5/5. Functionally, the alpha subunit is responsible for the aldol cleavage of indoleglycerol phosphate to indole and glyceraldehyde 3-phosphate. This Brucella suis biovar 1 (strain 1330) protein is Tryptophan synthase alpha chain.